The primary structure comprises 272 residues: ATP-dependent Clp protease proteolytic subunit, mitochondrial (272 aa).

A mitochondrion-targeting transit peptide spans 1–52; sequence MWPRVLLGEARVAVDGCRALLSRLAVHFSPPWTAVSCSPLRRSLHGTATRAF. The active-site Nucleophile is Ser149. His174 is an active-site residue. Lys196 carries the N6-succinyllysine modification. Lys207 is subject to N6-acetyllysine. The segment at 240 to 272 is disordered; the sequence is VLVHPPQDGEDEPELVQKETATAPTDPPAPTST.

Belongs to the peptidase S14 family. In terms of assembly, fourteen CLPP subunits assemble into 2 heptameric rings which stack back to back to give a disk-like structure with a central cavity. Component of the ClpXP complex formed by the assembly of two CLPP heptameric rings with two CLPX hexameric rings, giving rise to a symmetrical structure with two central CLPP rings flanked by a CLPX ring at either end of the complex. As to expression, detected in liver (at protein level). High levels found in heart, liver and skeletal muscle.

It localises to the mitochondrion matrix. It catalyses the reaction Hydrolysis of proteins to small peptides in the presence of ATP and magnesium. alpha-casein is the usual test substrate. In the absence of ATP, only oligopeptides shorter than five residues are hydrolyzed (such as succinyl-Leu-Tyr-|-NHMec, and Leu-Tyr-Leu-|-Tyr-Trp, in which cleavage of the -Tyr-|-Leu- and -Tyr-|-Trp bonds also occurs).. In terms of biological role, protease component of the ClpXP complex that cleaves peptides and various proteins in an ATP-dependent process. Has low peptidase activity in the absence of CLPX. The ClpXP complex can degrade CSN1S1, CSN2 and CSN3, as well as synthetic peptides (in vitro) and may be responsible for a fairly general and central housekeeping function rather than for the degradation of specific substrates. Cleaves PINK1 in the mitochondrion. The polypeptide is ATP-dependent Clp protease proteolytic subunit, mitochondrial (Mus musculus (Mouse)).